The following is a 343-amino-acid chain: Holliday junction branch migration complex subunit RuvB (343 aa).

A large ATPase domain (RuvB-L) region spans residues 4 to 193 (TDNLTAAQPQ…FGIVSRLEFY (190 aa)). ATP-binding positions include Leu-32, Arg-33, Gly-74, Lys-77, Thr-78, Thr-79, 140–142 (EDY), Arg-183, Tyr-193, and Arg-230. Thr-78 contacts Mg(2+). The interval 194-264 (ENRDLATIVS…IADAALSMLD (71 aa)) is small ATPAse domain (RuvB-S). The interval 267 to 343 (VQGLDVMDRK…YLHFGLPVEK (77 aa)) is head domain (RuvB-H). DNA is bound by residues Arg-322 and Arg-327.

Belongs to the RuvB family. As to quaternary structure, homohexamer. Forms an RuvA(8)-RuvB(12)-Holliday junction (HJ) complex. HJ DNA is sandwiched between 2 RuvA tetramers; dsDNA enters through RuvA and exits via RuvB. An RuvB hexamer assembles on each DNA strand where it exits the tetramer. Each RuvB hexamer is contacted by two RuvA subunits (via domain III) on 2 adjacent RuvB subunits; this complex drives branch migration. In the full resolvosome a probable DNA-RuvA(4)-RuvB(12)-RuvC(2) complex forms which resolves the HJ.

It localises to the cytoplasm. It catalyses the reaction ATP + H2O = ADP + phosphate + H(+). The RuvA-RuvB-RuvC complex processes Holliday junction (HJ) DNA during genetic recombination and DNA repair, while the RuvA-RuvB complex plays an important role in the rescue of blocked DNA replication forks via replication fork reversal (RFR). RuvA specifically binds to HJ cruciform DNA, conferring on it an open structure. The RuvB hexamer acts as an ATP-dependent pump, pulling dsDNA into and through the RuvAB complex. RuvB forms 2 homohexamers on either side of HJ DNA bound by 1 or 2 RuvA tetramers; 4 subunits per hexamer contact DNA at a time. Coordinated motions by a converter formed by DNA-disengaged RuvB subunits stimulates ATP hydrolysis and nucleotide exchange. Immobilization of the converter enables RuvB to convert the ATP-contained energy into a lever motion, pulling 2 nucleotides of DNA out of the RuvA tetramer per ATP hydrolyzed, thus driving DNA branch migration. The RuvB motors rotate together with the DNA substrate, which together with the progressing nucleotide cycle form the mechanistic basis for DNA recombination by continuous HJ branch migration. Branch migration allows RuvC to scan DNA until it finds its consensus sequence, where it cleaves and resolves cruciform DNA. This Neisseria meningitidis serogroup A / serotype 4A (strain DSM 15465 / Z2491) protein is Holliday junction branch migration complex subunit RuvB.